The chain runs to 839 residues: MRWSFLTVLLWLVSLTGAENGFNGWLRYAPVQCDKRCQRALPSSIVTLNSTDSGPIGTASQELQAGLENIVGKQLSIKRSSCGSRSSILVATLEQYRQACNRSSEVPSLGIDGFWLRAYGDTVQIVGENERGALYGAFEYLSLLAQGNFSHVDYTTSAHAPVRWVNQWDNMDGSIERGYAGPSIFFEDGHIVEDLSRVKQYARLLASIRINGVIVNNVNANATLLTSQNMDGLARIANVFRPYGIQIGISLNFASPDTLGGLGTYDPLDPSVISWWANITDSLYDRVPDMAGYLVKASSEGQPGPDTYNRTLAEGANVFAKALQPHGGILMFRTFVYDHHINESIWTNDRANAQVDFFKELDGQFEDNVILQIKYGPIDFQVREPVSPLFANLYKTNMAIELQVTQEYLGQQDHLVYLSPLWKELLDFDLRVDHQPSLVRDIVSGQRFDRQLGGWAAVVNVGTNTTWLGSHLAMSNLYAYGRLAWSPTDDSQGILQDWIRLTFGRDQNVLDTITDMSMASWPAYENYTGNLGIQTLTDILYTHYGPNPASQDNNGWGQWTRADHDTIGMDRTVKNGTGNAGQYPAEIAQVYEDLDSTPDDLLLWFHHVPYTHRLHSGKTVIQHFYDAHYDGAETAHRFLSQWESLKGRIDQQRYNEVLSRLVYQAGHSLVWRDAINNFYWNMSGISDEKNRVGHHPWRVEAESMTLDGYEPYTVSPFETASNYKAVVTTSNSTTGTAQTKLQFPSGTYDLGVNYYDMYGGKSEWTVYVNDRVVGQWEGNSENTLGHTPSIYIDGHSATRITFRGVEIENGDQLKIVGVPDGVEPAPLDYVVLLPPDVVD.

A signal peptide spans 1–18 (MRWSFLTVLLWLVSLTGA). N-linked (GlcNAc...) asparagine glycosylation is found at Asn-49, Asn-101, Asn-148, Asn-221, Asn-278, Asn-309, Asn-342, Asn-464, Asn-526, Asn-575, Asn-681, and Asn-731.

It belongs to the glycosyl hydrolase 67 family.

It localises to the secreted. It catalyses the reaction an alpha-D-glucuronoside + H2O = D-glucuronate + an alcohol. Alpha-glucuronidase involved in the hydrolysis of xylan, a major structural heterogeneous polysaccharide found in plant biomass representing the second most abundant polysaccharide in the biosphere, after cellulose. Releases 4-O-methylglucuronic acid from xylan. The chain is Probable alpha-glucuronidase A (aguA) from Aspergillus flavus (strain ATCC 200026 / FGSC A1120 / IAM 13836 / NRRL 3357 / JCM 12722 / SRRC 167).